Reading from the N-terminus, the 402-residue chain is Imidazolonepropionase (402 aa).

Fe(3+) is bound by residues His66 and His68. 2 residues coordinate Zn(2+): His66 and His68. Arg75, Tyr138, and His171 together coordinate 4-imidazolone-5-propanoate. Tyr138 is an N-formimidoyl-L-glutamate binding site. His236 is a binding site for Fe(3+). His236 contacts Zn(2+). Gln239 serves as a coordination point for 4-imidazolone-5-propanoate. Asp311 provides a ligand contact to Fe(3+). Asp311 is a binding site for Zn(2+). N-formimidoyl-L-glutamate contacts are provided by Asn313 and Gly315. Thr316 is a binding site for 4-imidazolone-5-propanoate.

Belongs to the metallo-dependent hydrolases superfamily. HutI family. The cofactor is Zn(2+). Fe(3+) serves as cofactor.

The protein localises to the cytoplasm. The enzyme catalyses 4-imidazolone-5-propanoate + H2O = N-formimidoyl-L-glutamate. Its pathway is amino-acid degradation; L-histidine degradation into L-glutamate; N-formimidoyl-L-glutamate from L-histidine: step 3/3. Functionally, catalyzes the hydrolytic cleavage of the carbon-nitrogen bond in imidazolone-5-propanoate to yield N-formimidoyl-L-glutamate. It is the third step in the universal histidine degradation pathway. In Pseudomonas aeruginosa (strain LESB58), this protein is Imidazolonepropionase.